The chain runs to 88 residues: Protein MATERNALLY EXPRESSED GENE 2 (88 aa).

The signal sequence occupies residues 1-27 (MEYRKRVDALVFFSLLLLGYFAAHAHG). A disulfide bond links Cys-65 and Cys-87.

The protein belongs to the MEG family. As to expression, expressed exclusively in endosperm.

This Zea mays (Maize) protein is Protein MATERNALLY EXPRESSED GENE 2 (MEG2).